Here is a 2142-residue protein sequence, read N- to C-terminus: U5 small nuclear ribonucleoprotein 200 kDa helicase (2142 aa).

3 disordered regions span residues 52–74 (MGDR…RQKR), 211–234 (EESE…QDEG), and 366–396 (RQLD…DGGA). A compositionally biased stretch (basic and acidic residues) spans 369–391 (DTGKSEDQEEGEARGSKRGKGDA). Residues 490–673 (KAALDSDENM…FLRVKPDKGL (184 aa)) form the Helicase ATP-binding 1 domain. Residue 503-510 (APTGAGKT) participates in ATP binding. Residues 615–618 (DEIH) carry the DEIH box motif. A Helicase C-terminal 1 domain is found at 684 to 917 (SLEQQYIGVT…GTVQHLQDAV (234 aa)). Positions 981–1286 (VTDLGRIASH…GAETQLPVSF (306 aa)) constitute an SEC63 1 domain. Residues 1337–1511 (NAVYNSDENV…WLGCNPNATF (175 aa)) form the Helicase ATP-binding 2 domain. An ATP-binding site is contributed by 1350 to 1357 (APTGSGKM). Residues 1453–1456 (DELQ) carry the DELQ box motif. A Helicase C-terminal 2 domain is found at 1544-1752 (PVYNAILKYS…TIENKQDAVD (209 aa)). Residues 1811–2128 (PLNLGMIAAY…GCDQEYKFSI (318 aa)) form the SEC63 2 domain.

Belongs to the helicase family. SKI2 subfamily.

The protein localises to the nucleus. The enzyme catalyses ATP + H2O = ADP + phosphate + H(+). Functionally, catalyzes the ATP-dependent unwinding of U4/U6 RNA duplices, an essential step in the assembly of a catalytically active spliceosome. Plays a role in pre-mRNA splicing. The chain is U5 small nuclear ribonucleoprotein 200 kDa helicase from Drosophila melanogaster (Fruit fly).